Here is an 820-residue protein sequence, read N- to C-terminus: MSDTRRRVKVYTLNEDRQWDDRGTGHVSSTYVDRLKGMSLLVRAESDGSLLLESKINPNTAYQKQQDTLIVWSEAENYDLALSFQEKAGCDEIWEKICQVQGKDPSVDVTQDPIDESEEERFEEMPETSNLIDLPTCELGKLEEIADLVTSVLSSPIRREKLALVLENEGYIKKLLQLFQTCENLDNTEGLHHLYEIIRGILFLNKAALFEVMFSDECIMDVVGCLEYDPALAQPKRHREFLTKTAKFKEVIPITDSELRQKIHQTYRVQYIQDVILPTPSVFEENFLSTLTSFIFFNKVEIVSMLQEDEKFLSEVFAQLTDEATDDDKRRELVNFFKEFCAFSQTLQPQNRDAFFKTLANLGILPALEIVMGMDDLQVRAAATDIFSYLVEFSPSMVREFVMQEAQQSDDDILLINVVIEQMICDSDPELGGAVQLMGLLRTLIDPENMLATANKTEKSEFLNFFYNHCMHVLTAPLLANTAEDKLEKDAVLGSIKTSTVCPDNFQTAQLLALILELLTFCVEHHTYHIKNYIMNKDLLRRVLILMNSKHTFLALCALRFMRRIIGLKDEFYNRYIIKGNLFEPVIHALLDNGTRYNLLNSAIIELFEFIRVEDIKSLTSHIVENFYKALESIEYVQTFKGLKTRYEQEKDRQSQKLSSVPSILRSNRFRRDARALEDDEELWFNEDDEEEGEAVVPPVEKTKPEDDFPEGYEKFLETKKAKELEDKENLPKRTSVGGFKFTFSHSVSAANGANSTNSKSVAAHTPPATSNGSSSKNTSLTTTVASTKGSLIGLVDYPDDEDEEEEEDTSPRKRPRLGS.

Positions 1–100 (MSDTRRRVKV…DEIWEKICQV (100 aa)) constitute a WH1 domain. Over residues 682–694 (ELWFNEDDEEEGE) the composition is skewed to acidic residues. 2 disordered regions span residues 682–711 (ELWF…DFPE) and 750–820 (AANG…RLGS). Residues 701-711 (EKTKPEDDFPE) show a composition bias toward basic and acidic residues. 2 stretches are compositionally biased toward polar residues: residues 750 to 761 (AANGANSTNSKS) and 768 to 790 (PATS…STKG). Positions 798–809 (YPDDEDEEEEED) are enriched in acidic residues.

Belongs to the SMEK family. Serine/threonine-protein phosphatase 4 (PP4) occurs in different assemblies of the catalytic and one or more regulatory subunits.

In terms of biological role, regulatory subunit of serine/threonine-protein phosphatase 4 (PP4). This chain is Serine/threonine-protein phosphatase 4 regulatory subunit 3-B, found in Xenopus laevis (African clawed frog).